The chain runs to 745 residues: 1,4-alpha-glucan branching enzyme GlgB (745 aa).

Asp416 serves as the catalytic Nucleophile. Glu469 functions as the Proton donor in the catalytic mechanism.

Belongs to the glycosyl hydrolase 13 family. GlgB subfamily. Monomer.

The enzyme catalyses Transfers a segment of a (1-&gt;4)-alpha-D-glucan chain to a primary hydroxy group in a similar glucan chain.. Its pathway is glycan biosynthesis; glycogen biosynthesis. In terms of biological role, catalyzes the formation of the alpha-1,6-glucosidic linkages in glycogen by scission of a 1,4-alpha-linked oligosaccharide from growing alpha-1,4-glucan chains and the subsequent attachment of the oligosaccharide to the alpha-1,6 position. The sequence is that of 1,4-alpha-glucan branching enzyme GlgB from Shewanella sp. (strain MR-4).